Reading from the N-terminus, the 352-residue chain is Ferrochelatase (352 aa).

The Fe cation site is built by His-222 and Glu-303.

Belongs to the ferrochelatase family.

It is found in the cytoplasm. The enzyme catalyses heme b + 2 H(+) = protoporphyrin IX + Fe(2+). It participates in porphyrin-containing compound metabolism; protoheme biosynthesis; protoheme from protoporphyrin-IX: step 1/1. In terms of biological role, catalyzes the ferrous insertion into protoporphyrin IX. This is Ferrochelatase from Brucella melitensis biotype 2 (strain ATCC 23457).